Reading from the N-terminus, the 180-residue chain is Large ribosomal subunit protein uL5 (180 aa).

This sequence belongs to the universal ribosomal protein uL5 family. Part of the 50S ribosomal subunit; part of the 5S rRNA/L5/L18/L25 subcomplex. Contacts the 5S rRNA and the P site tRNA. Forms a bridge to the 30S subunit in the 70S ribosome.

Its function is as follows. This is one of the proteins that bind and probably mediate the attachment of the 5S RNA into the large ribosomal subunit, where it forms part of the central protuberance. In the 70S ribosome it contacts protein S13 of the 30S subunit (bridge B1b), connecting the 2 subunits; this bridge is implicated in subunit movement. Contacts the P site tRNA; the 5S rRNA and some of its associated proteins might help stabilize positioning of ribosome-bound tRNAs. This Streptococcus suis (strain 05ZYH33) protein is Large ribosomal subunit protein uL5.